Here is a 94-residue protein sequence, read N- to C-terminus: Pyrimidine/purine nucleoside phosphorylase (94 aa).

Belongs to the nucleoside phosphorylase PpnP family.

It carries out the reaction a purine D-ribonucleoside + phosphate = a purine nucleobase + alpha-D-ribose 1-phosphate. It catalyses the reaction adenosine + phosphate = alpha-D-ribose 1-phosphate + adenine. The catalysed reaction is cytidine + phosphate = cytosine + alpha-D-ribose 1-phosphate. The enzyme catalyses guanosine + phosphate = alpha-D-ribose 1-phosphate + guanine. It carries out the reaction inosine + phosphate = alpha-D-ribose 1-phosphate + hypoxanthine. It catalyses the reaction thymidine + phosphate = 2-deoxy-alpha-D-ribose 1-phosphate + thymine. The catalysed reaction is uridine + phosphate = alpha-D-ribose 1-phosphate + uracil. The enzyme catalyses xanthosine + phosphate = alpha-D-ribose 1-phosphate + xanthine. In terms of biological role, catalyzes the phosphorolysis of diverse nucleosides, yielding D-ribose 1-phosphate and the respective free bases. Can use uridine, adenosine, guanosine, cytidine, thymidine, inosine and xanthosine as substrates. Also catalyzes the reverse reactions. In Aeromonas salmonicida (strain A449), this protein is Pyrimidine/purine nucleoside phosphorylase.